Here is a 485-residue protein sequence, read N- to C-terminus: Skb1 localization factor 1 (485 aa).

Residues 1-200 (MSSIIQNPIE…VDDSDLTPHT (200 aa)) are sufficient for interaction with Skb1. Disordered stretches follow at residues 117 to 230 (NAAN…MSRN), 286 to 416 (ETQH…LRRS), and 446 to 466 (TTQE…KPEK). Residues 171 to 182 (SRSSRYSKTSDL) show a composition bias toward polar residues. Over residues 189 to 198 (RFVDDSDLTP) the composition is skewed to basic and acidic residues. Composition is skewed to polar residues over residues 218 to 230 (GRSS…MSRN) and 341 to 363 (VGSS…QQDS). Ser-222 carries the post-translational modification Phosphoserine. A compositionally biased stretch (basic and acidic residues) spans 371 to 393 (SERSYRRVRDQYLSKPRLSDKNR). The segment covering 394 to 416 (YSTFSEFPGQGTPSASQSNLRRS) has biased composition (polar residues). A compositionally biased stretch (basic and acidic residues) spans 447-464 (TQERKPVVKPDSIKTVKP). The required and sufficient for plasma membrane anchoring; lysine-rich, may bind to anionic lipids in the plasma membrane stretch occupies residues 451–485 (KPVVKPDSIKTVKPEKKKSKGFFKKLMHKISHIFD). Phosphoserine is present on Ser-458.

Interacts with Skb1.

It localises to the cell membrane. In terms of biological role, acts as a membrane anchor for Skb1 in forming plasma membrane microdomains. Promotes mitotic entry by sequestering mitotic inhibitor Skb1 from its regulatory targets Cdr1 and Wee1. This is Skb1 localization factor 1 from Schizosaccharomyces pombe (strain 972 / ATCC 24843) (Fission yeast).